Consider the following 152-residue polypeptide: Xanthine-guanine phosphoribosyltransferase (152 aa).

Residues 37–38 (RG), Arg-69, and 88–96 (DDLVDTGGT) each bind 5-phospho-alpha-D-ribose 1-diphosphate. Arg-69 contributes to the GMP binding site. Asp-89 lines the Mg(2+) pocket. Residues Asp-92 and Ile-135 each contribute to the guanine site. Positions 92 and 135 each coordinate xanthine. Residues 92–96 (DTGGT) and 134–135 (WI) each bind GMP.

Belongs to the purine/pyrimidine phosphoribosyltransferase family. XGPT subfamily. As to quaternary structure, homotetramer. Requires Mg(2+) as cofactor.

The protein resides in the cell inner membrane. It carries out the reaction GMP + diphosphate = guanine + 5-phospho-alpha-D-ribose 1-diphosphate. It catalyses the reaction XMP + diphosphate = xanthine + 5-phospho-alpha-D-ribose 1-diphosphate. The enzyme catalyses IMP + diphosphate = hypoxanthine + 5-phospho-alpha-D-ribose 1-diphosphate. The protein operates within purine metabolism; GMP biosynthesis via salvage pathway; GMP from guanine: step 1/1. Its pathway is purine metabolism; XMP biosynthesis via salvage pathway; XMP from xanthine: step 1/1. In terms of biological role, purine salvage pathway enzyme that catalyzes the transfer of the ribosyl-5-phosphate group from 5-phospho-alpha-D-ribose 1-diphosphate (PRPP) to the N9 position of the 6-oxopurines guanine and xanthine to form the corresponding ribonucleotides GMP (guanosine 5'-monophosphate) and XMP (xanthosine 5'-monophosphate), with the release of PPi. To a lesser extent, also acts on hypoxanthine. The polypeptide is Xanthine-guanine phosphoribosyltransferase (Escherichia coli O127:H6 (strain E2348/69 / EPEC)).